The chain runs to 1253 residues: Structural polyprotein (1253 aa).

The host transcription inhibition stretch occupies residues Phe-37–Lys-71. Residues Ala-58–Glu-109 are disordered. Residues Pro-64–Pro-105 carry the Nuclear localization signal motif. A compositionally biased stretch (basic residues) spans Pro-65–Lys-107. The interval Lys-87–Ile-120 is binding to the viral RNA. Positions Pro-105–Cys-119 are ribosome-binding. Cys-119 and Cys-134 form a disulfide bridge. The 149-residue stretch at Cys-119–Trp-267 folds into the Peptidase S3 domain. Catalysis depends on His-145, which acts as the Charge relay system. The short motif at Ile-150–Phe-160 is the Nuclear export signal element. An interaction with spike glycoprotein E2 region spans residues Lys-161–Tyr-166. Asp-167 (charge relay system) is an active-site residue. A dimerization of the capsid protein region spans residues Pro-189–Ala-199. The Charge relay system role is filled by Ser-219. The segment at Asp-225–Arg-229 is dimerization of the capsid protein. Over Ser-268–Ser-701 the chain is Extracellular. Cystine bridges form between Cys-276–Cys-285, Cys-290–Cys-294, and Cys-293–Cys-325. N-linked (GlcNAc...) asparagine; by host glycosylation is present at Asn-280. Asn-327 carries an N-linked (GlcNAc...) asparagine; by host glycan. 6 disulfides stabilise this stretch: Cys-352-Cys-458, Cys-355-Cys-361, Cys-424-Cys-438, Cys-486-Cys-598, Cys-534-Cys-558, and Cys-536-Cys-553. Asn-533 is a glycosylation site (N-linked (GlcNAc...) asparagine; by host). N-linked (GlcNAc...) asparagine; by host glycosylation is present at Asn-595. Residues Ala-702–Val-722 form a helical membrane-spanning segment. Cys-718 is lipidated: S-stearoyl cysteine; by host. An interaction with the capsid protein region spans residues Ala-723–Lys-727. Over Ala-723–Ala-755 the chain is Cytoplasmic. The S-stearoyl cysteine; by host moiety is linked to residue Cys-728. Positions Cys-728–Cys-748 are transient transmembrane before p62-6K protein processing. A disulfide bridge links Cys-728 with Cys-749. 2 S-palmitoyl cysteine; by host lipidation sites follow: Cys-748 and Cys-749. Over Ala-756–Gln-770 the chain is Extracellular. A helical transmembrane segment spans residues Ala-771 to Leu-791. A topological domain (cytoplasmic) is located at residue Arg-792. Residues Asn-793–Ala-813 form a helical membrane-spanning segment. Residues Arg-814–Gly-1230 lie on the Extracellular side of the membrane. Disulfide bonds link Cys-864–Cys-929, Cys-877–Cys-909, Cys-878–Cys-911, and Cys-883–Cys-893. Residues Val-899–Thr-916 are E1 fusion peptide loop. N-linked (GlcNAc...) asparagine; by host glycosylation is found at Asn-956 and Asn-1085. Disulfide bonds link Cys-1074–Cys-1086, Cys-1116–Cys-1191, Cys-1121–Cys-1195, and Cys-1143–Cys-1185. An E1-DIII; interaction with host receptor VLDLR region spans residues Ile-1112–Ser-1192. A helical transmembrane segment spans residues Gly-1231 to Leu-1251. Residue Cys-1248 is the site of S-stearoyl cysteine; by host attachment. Residues Arg-1252–Arg-1253 are Cytoplasmic-facing.

As to quaternary structure, homodimer. Homomultimer. Interacts with host karyopherin KPNA4; this interaction allows the nuclear import of the viral capsid protein. Interacts with spike glycoprotein E2. Interacts with host IRAK1; the interaction leads to inhibition of IRAK1-dependent signaling. In terms of assembly, the precursor of protein E3/E2 and E1 form a heterodimer shortly after synthesis. The precursor of protein E3/E2 and E1 form a heterodimer shortly after synthesis. Processing of the precursor of protein E3/E2 into E2 and E3 results in a heterodimer of the spike glycoproteins E2 and E1. Spike at virion surface are constituted of a trimer of E2-E1 heterodimers. E2-E1 heterodimers interact with host VLDLR or LRP8/APOER2 to mediate viral entry. After target cell attachment and endocytosis, E1 change conformation to form homotrimers. Interacts with 6K protein. Interacts (via E1-DIII) with host VLDLR (via class A repeats); this interaction mediates viral entry into host cell. As to quaternary structure, interacts with spike glycoprotein E1. Processing of the precursor of protein E3/E2 into E2 and E3 results in a heterodimer of the spike glycoproteins E2 and E1. Spike at virion surface are constituted of a trimer of E2-E1 heterodimers. E2-E1 heterodimers interact with host VLDLR or LRP8/APOER2 to mediate viral entry. Interacts with 6K protein. In terms of assembly, oligomer. Interacts with spike glycoprotein E1. Interacts with spike glycoprotein E2. Post-translationally, specific enzymatic cleavages in vivo yield mature proteins. Capsid protein is auto-cleaved during polyprotein translation, unmasking a signal peptide at the N-terminus of the precursor of E3/E2. The remaining polyprotein is then targeted to the host endoplasmic reticulum, where host signal peptidase cleaves it into pE2, 6K and E1 proteins. pE2 is further processed to mature E3 and E2 by host furin in trans-Golgi vesicle. Protein processing process takes about 30 minutes at physiologic temperatures. The folding of the p62/6K/E1 precursor requires the formation of intrachain disulfide bonds and has been shown to involve a transient covalent interaction between the nascent and newly synthesized heterodimer and the host-cell chaperones, P4HB/PDI and PDIA3/ERp57. The folding pathway also includes non covalent interaction with human CANX/calnexin and CALR/calreticulin. Palmitoylated via thioester bonds. These palmitoylations may induce disruption of the C-terminus transmembrane. This would result in the reorientation of E2 C-terminus from lumenal to cytoplasmic side. In terms of processing, envelope E1, E2 and E3 proteins are N-glycosylated. Post-translationally, stearoylated. Palmitoylated via thioester bonds with about four covalently bound fatty acids per molecule.

Its subcellular location is the virion. It localises to the host cytoplasm. It is found in the host cell membrane. The protein localises to the host nucleus. The protein resides in the virion membrane. Its subcellular location is the host Golgi apparatus. It localises to the host trans-Golgi network. It is found in the host endoplasmic reticulum. It carries out the reaction Autocatalytic release of the core protein from the N-terminus of the togavirus structural polyprotein by hydrolysis of a -Trp-|-Ser- bond.. Functionally, forms an icosahedral capsid with a T=4 symmetry composed of 240 copies of the capsid protein surrounded by a lipid membrane through which penetrate 80 spikes composed of trimers of E1-E2 heterodimers. The capsid protein binds to the viral RNA genome at a site adjacent to a ribosome binding site for viral genome translation following genome release. Possesses a protease activity that results in its autocatalytic cleavage from the nascent structural protein. Following its self-cleavage, the capsid protein transiently associates with ribosomes, and within several minutes the protein binds to viral RNA and rapidly assembles into icosahedric core particles. The resulting nucleocapsid eventually associates with the cytoplasmic domain of the spike glycoprotein E2 at the cell membrane, leading to budding and formation of mature virions. In case of infection, new virions attach to target cells and after clathrin-mediated endocytosis their membrane fuses with the host endosomal membrane. This leads to the release of the nucleocapsid into the cytoplasm, followed by an uncoating event necessary for the genomic RNA to become accessible. The uncoating might be triggered by the interaction of capsid proteins with ribosomes. Binding of ribosomes would release the genomic RNA since the same region is genomic RNA-binding and ribosome-binding. Specifically inhibits interleukin-1 receptor-associated kinase 1/IRAK1-dependent signaling during viral entry, representing a means by which the alphaviruses may evade innate immune detection and activation prior to viral gene expression. Provides the signal sequence for the translocation of the precursor of protein E3/E2 to the host endoplasmic reticulum. Furin-cleaved E3 remains associated with spike glycoprotein E1 and mediates pH protection of the latter during the transport via the secretory pathway. After virion release from the host cell, the assembly protein E3 is gradually released in the extracellular space. Its function is as follows. Plays a role in viral attachment to target host cell, by binding to the cell receptors VLDLR or LRP8/APOER2. The host LDLR can act as a cell receptor for viral entry. Synthesized as a p62 precursor which is processed by furin at the cell membrane just before virion budding, giving rise to E2-E1 heterodimer. The p62-E1 heterodimer is stable, whereas E2-E1 is unstable and dissociate at low pH. p62 is processed at the last step, presumably to avoid E1 fusion activation before its final export to cell surface. E2 C-terminus contains a transitory transmembrane that would be disrupted by palmitoylation, resulting in reorientation of the C-terminal tail from lumenal to cytoplasmic side. This step is critical since E2 C-terminus is involved in budding by interacting with capsid proteins. This release of E2 C-terminus in cytoplasm occurs lately in protein export, and precludes premature assembly of particles at the endoplasmic reticulum membrane. In terms of biological role, acts as a viroporin that participates in virus glycoprotein processing and transport to the plasma membrane, cell permeabilization and budding of viral particles. Disrupts the calcium homeostasis of the cell, probably at the endoplasmic reticulum level. This leads to cytoplasmic calcium elevation. Because of its lipophilic properties, the 6K protein is postulated to influence the selection of lipids that interact with the transmembrane domains of the glycoproteins, which, in turn, affects the deformability of the bilayer required for the extreme curvature that occurs as budding proceeds. Present in low amount in virions, about 3% compared to viral glycoproteins. Functionally, class II viral fusion protein. Fusion activity is inactive as long as E1 is bound to E2 in mature virion. After virus attachment to target cell via host VLDLR or LRP8/APOER2 and endocytosis, acidification of the endosome induces dissociation of E1/E2 heterodimer and concomitant trimerization of the E1 subunits. This E1 trimer is fusion active, and promotes release of viral nucleocapsid in cytoplasm after endosome and viral membrane fusion. Efficient fusion requires the presence of cholesterol and sphingolipid in the target membrane. Fusion is optimal at levels of about 1 molecule of cholesterol per 2 molecules of phospholipids, and is specific for sterols containing a 3-beta-hydroxyl group. The chain is Structural polyprotein from Aedes (Middle-African hedgehog).